A 76-amino-acid polypeptide reads, in one-letter code: Small ribosomal subunit protein eS17 (76 aa).

It belongs to the eukaryotic ribosomal protein eS17 family.

This Picrophilus torridus (strain ATCC 700027 / DSM 9790 / JCM 10055 / NBRC 100828 / KAW 2/3) protein is Small ribosomal subunit protein eS17.